Reading from the N-terminus, the 741-residue chain is Chromosome transmission fidelity protein 18 (741 aa).

183–190 (GPPGIGKT) serves as a coordination point for ATP.

Belongs to the activator 1 small subunits family. CTF18 subfamily. As to quaternary structure, component of the CTF18-RFC complex, which consists of CTF18, CTF8, DCC1, RFC2, RFC3, RFC4 and RFC5. CTF18 interacts with ECO1.

The protein resides in the nucleus. In terms of biological role, essential for the fidelity of chromosome transmission. Required for the DNA replication block checkpoint. Component of the RFC-like complex CTF18-RFC which is required for efficient establishment of chromosome cohesion during S-phase and may load or unload POL30/PCNA. During a clamp loading circle, the RFC:clamp complex binds to DNA and the recognition of the double-stranded/single-stranded junction stimulates ATP hydrolysis by RFC. The complex presumably provides bipartite ATP sites in which one subunit supplies a catalytic site for hydrolysis of ATP bound to the neighboring subunit. Dissociation of RFC from the clamp leaves the clamp encircling DNA. The protein is Chromosome transmission fidelity protein 18 (CTF18) of Saccharomyces cerevisiae (strain ATCC 204508 / S288c) (Baker's yeast).